Reading from the N-terminus, the 458-residue chain is tRNA modification GTPase MnmE (458 aa).

Residues Arg22, Glu85, and Arg124 each coordinate (6S)-5-formyl-5,6,7,8-tetrahydrofolate. Residues 220–379 (GIKTVIVGRP…LEEHISELVF (160 aa)) enclose the TrmE-type G domain. Asn230 serves as a coordination point for K(+). Residues 230–235 (NVGKSS), 249–255 (TEIPGTT), and 274–277 (DTAG) each bind GTP. Ser234 serves as a coordination point for Mg(2+). K(+)-binding residues include Thr249, Ile251, and Thr254. Position 255 (Thr255) interacts with Mg(2+). Position 458 (Lys458) interacts with (6S)-5-formyl-5,6,7,8-tetrahydrofolate.

It belongs to the TRAFAC class TrmE-Era-EngA-EngB-Septin-like GTPase superfamily. TrmE GTPase family. As to quaternary structure, homodimer. Heterotetramer of two MnmE and two MnmG subunits. The cofactor is K(+).

It localises to the cytoplasm. Its function is as follows. Exhibits a very high intrinsic GTPase hydrolysis rate. Involved in the addition of a carboxymethylaminomethyl (cmnm) group at the wobble position (U34) of certain tRNAs, forming tRNA-cmnm(5)s(2)U34. The chain is tRNA modification GTPase MnmE from Natranaerobius thermophilus (strain ATCC BAA-1301 / DSM 18059 / JW/NM-WN-LF).